Here is a 451-residue protein sequence, read N- to C-terminus: Tubulin alpha-2 chain (451 aa).

Gln-11 is a GTP binding site. Lys-40 is subject to N6-acetyllysine. GTP-binding residues include Glu-71, Gly-144, Thr-145, Thr-179, Asn-206, and Asn-228. A Mg(2+)-binding site is contributed by Glu-71. Glu-254 is an active-site residue.

Belongs to the tubulin family. Dimer of alpha and beta chains. A typical microtubule is a hollow water-filled tube with an outer diameter of 25 nm and an inner diameter of 15 nM. Alpha-beta heterodimers associate head-to-tail to form protofilaments running lengthwise along the microtubule wall with the beta-tubulin subunit facing the microtubule plus end conferring a structural polarity. Microtubules usually have 13 protofilaments but different protofilament numbers can be found in some organisms and specialized cells. It depends on Mg(2+) as a cofactor. In terms of processing, undergoes a tyrosination/detyrosination cycle, the cyclic removal and re-addition of a C-terminal tyrosine residue by the enzymes tubulin tyrosine carboxypeptidase (TTCP) and tubulin tyrosine ligase (TTL), respectively. Post-translationally, acetylation of alpha chains at Lys-40 stabilizes microtubules and affects affinity and processivity of microtubule motors. This modification has a role in multiple cellular functions, ranging from cell motility, cell cycle progression or cell differentiation to intracellular trafficking and signaling.

Its subcellular location is the cytoplasm. It is found in the cytoskeleton. It catalyses the reaction GTP + H2O = GDP + phosphate + H(+). Its function is as follows. Tubulin is the major constituent of microtubules, a cylinder consisting of laterally associated linear protofilaments composed of alpha- and beta-tubulin heterodimers. Microtubules grow by the addition of GTP-tubulin dimers to the microtubule end, where a stabilizing cap forms. Below the cap, tubulin dimers are in GDP-bound state, owing to GTPase activity of alpha-tubulin. The protein is Tubulin alpha-2 chain (TUBA2) of Hordeum vulgare (Barley).